Here is a 755-residue protein sequence, read N- to C-terminus: Ribosome biogenesis protein BOP1 (755 aa).

2 stretches are compositionally biased toward polar residues: residues 1–10 and 43–61; these read MSQEPSSSFS and ELSSSSDNGDQGQPLTEPN. A disordered region spans residues 1–65; the sequence is MSQEPSSSFS…PLTEPNNIPI (65 aa). Residues 309-754 form an interaction with EB1 region; it reads MDSMLPTLPN…SGTDGVLRLF (446 aa). The WD 1 repeat unit spans residues 335–374; that stretch reads TGTRRINGLTFSPKGMFFAVGGRDCILRVFETYSGRQVRA. A disordered region spans residues 482-505; that stretch reads YNEGSEDDDAAESARFNEERHQRG. Over residues 496–505 the composition is skewed to basic and acidic residues; the sequence is RFNEERHQRG. WD repeat units lie at residues 617–655, 659–698, and 725–755; these read PGVKQVTASGMGYGDNFITGSADSQCALFANAAGPEPTA, YHTSTIRNIDVHPCGGLVATCSDDGIVQISRIVDASLVKM, and DGSVGISRVTWHPRQPWLLCSGTDGVLRLFK.

Belongs to the WD repeat BOP1/ERB1 family. Interacts (via C-terminal WD repeats) with giardin subunit beta. Interacts (via C-terminal WD repeats) with EB1.

It localises to the nucleus. The protein resides in the nucleolus. The protein localises to the nucleus membrane. Required for maturation of ribosomal RNAs and formation of the large ribosomal subunit. This chain is Ribosome biogenesis protein BOP1, found in Giardia intestinalis (Giardia lamblia).